Reading from the N-terminus, the 357-residue chain is UDP-N-acetylglucosamine--N-acetylmuramyl-(pentapeptide) pyrophosphoryl-undecaprenol N-acetylglucosamine transferase (357 aa).

UDP-N-acetyl-alpha-D-glucosamine is bound by residues 14–16 (TGG), N128, R169, S193, I248, and Q292.

It belongs to the glycosyltransferase 28 family. MurG subfamily.

The protein localises to the cell inner membrane. The catalysed reaction is di-trans,octa-cis-undecaprenyl diphospho-N-acetyl-alpha-D-muramoyl-L-alanyl-D-glutamyl-meso-2,6-diaminopimeloyl-D-alanyl-D-alanine + UDP-N-acetyl-alpha-D-glucosamine = di-trans,octa-cis-undecaprenyl diphospho-[N-acetyl-alpha-D-glucosaminyl-(1-&gt;4)]-N-acetyl-alpha-D-muramoyl-L-alanyl-D-glutamyl-meso-2,6-diaminopimeloyl-D-alanyl-D-alanine + UDP + H(+). It participates in cell wall biogenesis; peptidoglycan biosynthesis. Its function is as follows. Cell wall formation. Catalyzes the transfer of a GlcNAc subunit on undecaprenyl-pyrophosphoryl-MurNAc-pentapeptide (lipid intermediate I) to form undecaprenyl-pyrophosphoryl-MurNAc-(pentapeptide)GlcNAc (lipid intermediate II). The sequence is that of UDP-N-acetylglucosamine--N-acetylmuramyl-(pentapeptide) pyrophosphoryl-undecaprenol N-acetylglucosamine transferase from Bdellovibrio bacteriovorus (strain ATCC 15356 / DSM 50701 / NCIMB 9529 / HD100).